A 908-amino-acid chain; its full sequence is Glutamate receptor ionotropic, kainate 2 (908 aa).

An N-terminal signal peptide occupies residues 1 to 31 (MQRIAGITKMVTHRRWLGLLLLLLCVGYSHG). The Extracellular portion of the chain corresponds to 32-561 (MPHVLRFGGI…VFSFLNPLSP (530 aa)). Asparagine 67, asparagine 73, asparagine 275, asparagine 378, asparagine 412, asparagine 423, and asparagine 430 each carry an N-linked (GlcNAc...) asparagine glycan. A disulfide bridge links cysteine 96 with cysteine 347. 3 residues coordinate L-glutamate: proline 516, alanine 518, and arginine 523. A glycan (N-linked (GlcNAc...) asparagine) is linked at asparagine 546. Residues 562-582 (DIWMYILLAYLGVSCVLFVIA) traverse the membrane as a helical segment. Over 583 to 638 (RFSPYEWYNPHPCNPDSDVVENNFTLLNSFWFGVGALMQQGSELMPKALSTRIVGG) the chain is Cytoplasmic. Residues 639-659 (IWWFFTLIIISSYTANLAAFL) form a helical membrane-spanning segment. Over 660–819 (TVERMESPID…KEASALGVQN (160 aa)) the chain is Extracellular. L-glutamate contacts are provided by serine 689, threonine 690, and glutamate 738. A disulfide bond links cysteine 750 and cysteine 804. The N-linked (GlcNAc...) asparagine glycan is linked to asparagine 751. Residues 820-840 (IGGIFIVLAAGLVLSVFVAVG) form a helical membrane-spanning segment. The Cytoplasmic segment spans residues 841–908 (EFLYKSKQNA…RRLPGKETMA (68 aa)).

Belongs to the glutamate-gated ion channel (TC 1.A.10.1) family. GRIK2 subfamily. Homotetramer and heterotetramer with GRIK5. Tetramers may be formed by the dimerization of dimers.

The protein resides in the cell membrane. Its subcellular location is the postsynaptic cell membrane. The catalysed reaction is Ca(2+)(in) = Ca(2+)(out). It catalyses the reaction Na(+)(in) = Na(+)(out). Its activity is regulated as follows. Cold receptor activity activated by temperatures between 10-19 degrees Celsius. Functionally, ionotropic glutamate receptor that functions as a cation-permeable ligand-gated ion channel, gated by L-glutamate and the glutamatergic agonist kainic acid. L-glutamate acts as an excitatory neurotransmitter at many synapses in the central nervous system. Binding of the excitatory neurotransmitter L-glutamate induces a conformation change, leading to the opening of the cation channel, and thereby converts the chemical signal to an electrical impulse. The receptor then desensitizes rapidly and enters a transient inactive state, characterized by the presence of bound agonist. In terms of biological role, independent of its ionotropic glutamate receptor activity, acts as a thermoreceptor conferring sensitivity to cold temperatures. Functions in dorsal root ganglion neurons. The sequence is that of Glutamate receptor ionotropic, kainate 2 from Danio rerio (Zebrafish).